The chain runs to 338 residues: Large ribosomal subunit protein uL10 (338 aa).

Residues 298 to 338 form a disordered region; it reads TVQQSQSQQPAAEEKKEEKKEEEKKGPSEEEIASGLASLFG. The segment covering 309 to 325 has biased composition (basic and acidic residues); it reads AEEKKEEKKEEEKKGPS.

It belongs to the universal ribosomal protein uL10 family. As to quaternary structure, part of the 50S ribosomal subunit. Forms part of the ribosomal stalk which helps the ribosome interact with GTP-bound translation factors. Forms a heptameric L10(L12)2(L12)2(L12)2 complex, where L10 forms an elongated spine to which the L12 dimers bind in a sequential fashion.

Functionally, forms part of the ribosomal stalk, playing a central role in the interaction of the ribosome with GTP-bound translation factors. The chain is Large ribosomal subunit protein uL10 from Saccharolobus solfataricus (strain ATCC 35092 / DSM 1617 / JCM 11322 / P2) (Sulfolobus solfataricus).